A 347-amino-acid chain; its full sequence is Probable cytosolic iron-sulfur protein assembly protein 1 (347 aa).

7 WD repeats span residues 11–48, 62–101, 122–161, 168–207, 212–255, 266–304, and 311–347; these read LHNE…DGLV, SHKK…GDAD, GHEN…EEYE, EHSQ…WEAA, GHEG…SIEE, VHGK…VWEV, and SHSI…WAYN.

The protein belongs to the WD repeat CIA1 family. As to quaternary structure, interacts with NAR1.

Its subcellular location is the cytoplasm. It is found in the nucleus. In terms of biological role, essential component of the cytosolic iron-sulfur (Fe/S) protein assembly machinery. Required for the maturation of extramitochondrial Fe/S proteins. The sequence is that of Probable cytosolic iron-sulfur protein assembly protein 1 from Vanderwaltozyma polyspora (strain ATCC 22028 / DSM 70294 / BCRC 21397 / CBS 2163 / NBRC 10782 / NRRL Y-8283 / UCD 57-17) (Kluyveromyces polysporus).